The chain runs to 391 residues: Salivary protein TRIO (391 aa).

An N-terminal signal peptide occupies residues methionine 1–glycine 24. The N-linked (GlcNAc...) asparagine glycan is linked to asparagine 323.

In terms of tissue distribution, female salivary gland (at protein level). Female saliva (at protein level). Not detected in female midgut, head and carcass (at protein level). Not detected in male tissues (at protein level).

It localises to the secreted. Required for efficient probing on a mammalian host. Alters the local inflammatory response in the host skin following a mosquito bite by suppressing TNF-alpha/TNF expression. Functionally, (Microbial infection) Contributes to optimal transmission of Plasmodium berghei sporozoites to mice. In terms of biological role, (Microbial infection) Contributes to optimal transmission of Plasmodium falciparum sporozoites to mammalian host. The protein is Salivary protein TRIO of Anopheles gambiae (African malaria mosquito).